We begin with the raw amino-acid sequence, 229 residues long: 2-C-methyl-D-erythritol 4-phosphate cytidylyltransferase (229 aa).

The protein belongs to the IspD/TarI cytidylyltransferase family. IspD subfamily.

The catalysed reaction is 2-C-methyl-D-erythritol 4-phosphate + CTP + H(+) = 4-CDP-2-C-methyl-D-erythritol + diphosphate. Its pathway is isoprenoid biosynthesis; isopentenyl diphosphate biosynthesis via DXP pathway; isopentenyl diphosphate from 1-deoxy-D-xylulose 5-phosphate: step 2/6. Functionally, catalyzes the formation of 4-diphosphocytidyl-2-C-methyl-D-erythritol from CTP and 2-C-methyl-D-erythritol 4-phosphate (MEP). This Neisseria meningitidis serogroup A / serotype 4A (strain DSM 15465 / Z2491) protein is 2-C-methyl-D-erythritol 4-phosphate cytidylyltransferase.